A 242-amino-acid chain; its full sequence is ATP synthase subunit a (242 aa).

The next 6 membrane-spanning stretches (helical) occupy residues 29-49 (SSIYMLLASILALTYFYLAFY), 84-104 (FIPLVFSLFIFVLFSNLLGMT), 114-134 (IIVTFTLAIIVFLTVTIVGFV), 140-160 (FLTLFLPYGTPLWLAPLMIVI), 181-201 (MAGHVLLKVIAGFTVSLMIYL), and 203-223 (FLPIPIIVILIGFEIFVAILQ).

Belongs to the ATPase A chain family. As to quaternary structure, F-type ATPases have 2 components, CF(1) - the catalytic core - and CF(0) - the membrane proton channel. CF(1) has five subunits: alpha(3), beta(3), gamma(1), delta(1), epsilon(1). CF(0) has three main subunits: a(1), b(2) and c(9-12). The alpha and beta chains form an alternating ring which encloses part of the gamma chain. CF(1) is attached to CF(0) by a central stalk formed by the gamma and epsilon chains, while a peripheral stalk is formed by the delta and b chains.

It is found in the cell inner membrane. Functionally, key component of the proton channel; it plays a direct role in the translocation of protons across the membrane. The sequence is that of ATP synthase subunit a from Rickettsia akari (strain Hartford).